A 784-amino-acid polypeptide reads, in one-letter code: E3 UFM1-protein ligase 1 homolog (784 aa).

Basic and acidic residues predominate over residues 398 to 414 (QEVDHGVMEEEKADKRE). Residues 398–472 (QEVDHGVMEE…ASNKKGGKDP (75 aa)) are disordered.

This sequence belongs to the UFL1 family.

In terms of biological role, E3 UFM1-protein ligase that mediates ufmylation of target proteins. In Anopheles gambiae (African malaria mosquito), this protein is E3 UFM1-protein ligase 1 homolog.